The chain runs to 156 residues: UPF0262 protein Jann_2882 (156 aa).

It belongs to the UPF0262 family.

This Jannaschia sp. (strain CCS1) protein is UPF0262 protein Jann_2882.